A 360-amino-acid polypeptide reads, in one-letter code: MTTLLQQQGSANLWERFCQWVTSTENRFYVGWFGVLMIPTLLTATICFILAFVAAPPVDIDGIREPVAGSLLYGNNIITAAVVPSSNAIGLHFYPIWDAANLDEWLYNGGPYQLIVFHFLLGIFSYMGREWELSYRLGMRPWIAVAYSAPVAAATAVLLVYSIGQGSFSDGLPLGISGTFNFMFVLQAEHNVLMHPFHMLGVAGVFGGALFSAMHGSLVTSSLIRETTETESQNSGYRFGQEEETYNIVAAHGYFGRLIFQYASFNNSRALHFFLAAWPVIGIWFASLAVACFAFNLNGFNFNQSLLDSQGRVINTWADILNRANLGIEAMHERNVHNFPLDLAAGDQAPVALQAPAING.

Transmembrane regions (helical) follow at residues 29-46 (YVGW…TATI), 118-133 (HFLL…EWEL), and 142-156 (WIAV…AATA). His118 provides a ligand contact to chlorophyll a. Residue Tyr126 participates in pheophytin a binding. 2 residues coordinate [CaMn4O5] cluster: Asp170 and Glu189. Residues 197–218 (FHMLGVAGVFGGALFSAMHGSL) traverse the membrane as a helical segment. His198 serves as a coordination point for chlorophyll a. Residues His215 and 264–265 (SF) contribute to the a quinone site. His215 is a binding site for Fe cation. Residue His272 participates in Fe cation binding. Residues 274-288 (FLAAWPVIGIWFASL) traverse the membrane as a helical segment. Residues His332, Glu333, Asp342, and Ala344 each contribute to the [CaMn4O5] cluster site. Residues 345-360 (AGDQAPVALQAPAING) constitute a propeptide that is removed on maturation.

Belongs to the reaction center PufL/M/PsbA/D family. As to quaternary structure, PSII is composed of 1 copy each of membrane proteins PsbA, PsbB, PsbC, PsbD, PsbE, PsbF, PsbH, PsbI, PsbJ, PsbK, PsbL, PsbM, PsbT, PsbX, PsbY, PsbZ, Psb30/Ycf12, peripheral proteins PsbO, CyanoQ (PsbQ), PsbU, PsbV and a large number of cofactors. It forms dimeric complexes. The cofactor is The D1/D2 heterodimer binds P680, chlorophylls that are the primary electron donor of PSII, and subsequent electron acceptors. It shares a non-heme iron and each subunit binds pheophytin, quinone, additional chlorophylls, carotenoids and lipids. D1 provides most of the ligands for the Mn4-Ca-O5 cluster of the oxygen-evolving complex (OEC). There is also a Cl(-1) ion associated with D1 and D2, which is required for oxygen evolution. The PSII complex binds additional chlorophylls, carotenoids and specific lipids.. Tyr-161 forms a radical intermediate that is referred to as redox-active TyrZ, YZ or Y-Z. Post-translationally, C-terminally processed by CtpA; processing is essential to allow assembly of the oxygen-evolving complex and thus photosynthetic growth.

Its subcellular location is the cellular thylakoid membrane. It catalyses the reaction 2 a plastoquinone + 4 hnu + 2 H2O = 2 a plastoquinol + O2. Its function is as follows. Photosystem II (PSII) is a light-driven water:plastoquinone oxidoreductase that uses light energy to abstract electrons from H(2)O, generating O(2) and a proton gradient subsequently used for ATP formation. It consists of a core antenna complex that captures photons, and an electron transfer chain that converts photonic excitation into a charge separation. The D1/D2 (PsbA/PsbD) reaction center heterodimer binds P680, the primary electron donor of PSII as well as several subsequent electron acceptors. The protein is Photosystem II protein D1 3 of Picosynechococcus sp. (strain ATCC 27264 / PCC 7002 / PR-6) (Agmenellum quadruplicatum).